Reading from the N-terminus, the 90-residue chain is U7-theraphotoxin-Hhn1a 1 (90 aa).

Positions 1-19 are cleaved as a signal peptide; the sequence is MKTAIFTVVLALAVFAVLS. A propeptide spanning residues 20–50 is cleaved from the precursor; the sequence is FGWEANEKALSEEFTELIHEKEAASETEARE. Disulfide bonds link Cys-51-Cys-65, Cys-58-Cys-70, and Cys-64-Cys-81.

Belongs to the neurotoxin 10 (Hwtx-1) family. 13 (Hntx-13) subfamily. In terms of tissue distribution, expressed by the venom gland.

The protein resides in the secreted. In terms of biological role, ion channel inhibitor. The sequence is that of U7-theraphotoxin-Hhn1a 1 from Cyriopagopus hainanus (Chinese bird spider).